The following is a 64-amino-acid chain: Large ribosomal subunit protein bL32 (64 aa).

The disordered stretch occupies residues methionine 1 to alanine 23.

The protein belongs to the bacterial ribosomal protein bL32 family.

The protein is Large ribosomal subunit protein bL32 of Xylella fastidiosa (strain M23).